We begin with the raw amino-acid sequence, 60 residues long: Ribosome-inactivating protein dianthin-32 (60 aa).

Belongs to the ribosome-inactivating protein family. Type 1 RIP subfamily.

It carries out the reaction Endohydrolysis of the N-glycosidic bond at one specific adenosine on the 28S rRNA.. In terms of biological role, single-chain ribosome-inactivating protein. This chain is Ribosome-inactivating protein dianthin-32, found in Dianthus caryophyllus (Carnation).